The primary structure comprises 450 residues: UDP-N-acetylmuramoylalanine--D-glutamate ligase (450 aa).

119–125 (GSNGKTT) provides a ligand contact to ATP.

It belongs to the MurCDEF family.

It is found in the cytoplasm. The enzyme catalyses UDP-N-acetyl-alpha-D-muramoyl-L-alanine + D-glutamate + ATP = UDP-N-acetyl-alpha-D-muramoyl-L-alanyl-D-glutamate + ADP + phosphate + H(+). The protein operates within cell wall biogenesis; peptidoglycan biosynthesis. In terms of biological role, cell wall formation. Catalyzes the addition of glutamate to the nucleotide precursor UDP-N-acetylmuramoyl-L-alanine (UMA). This Bacillus anthracis (strain A0248) protein is UDP-N-acetylmuramoylalanine--D-glutamate ligase.